We begin with the raw amino-acid sequence, 190 residues long: Protein GrpE (190 aa).

The disordered stretch occupies residues 21-49 (DDLQEEVEATETEETVEEVIEETPEKSEL). Positions 23–42 (LQEEVEATETEETVEEVIEE) are enriched in acidic residues.

The protein belongs to the GrpE family. As to quaternary structure, homodimer.

It localises to the cytoplasm. Participates actively in the response to hyperosmotic and heat shock by preventing the aggregation of stress-denatured proteins, in association with DnaK and GrpE. It is the nucleotide exchange factor for DnaK and may function as a thermosensor. Unfolded proteins bind initially to DnaJ; upon interaction with the DnaJ-bound protein, DnaK hydrolyzes its bound ATP, resulting in the formation of a stable complex. GrpE releases ADP from DnaK; ATP binding to DnaK triggers the release of the substrate protein, thus completing the reaction cycle. Several rounds of ATP-dependent interactions between DnaJ, DnaK and GrpE are required for fully efficient folding. In Streptococcus pyogenes serotype M3 (strain SSI-1), this protein is Protein GrpE.